Reading from the N-terminus, the 398-residue chain is S-adenosylmethionine synthase (398 aa).

Residues 1 to 21 (MAANRRLFTSESVTEGHPDKM) form a disordered region. An ATP-binding site is contributed by H17. D19 contributes to the Mg(2+) binding site. K(+) is bound at residue E45. Residues E58 and Q101 each coordinate L-methionine. Residues 101–111 (QSADIAGGVNQ) form a flexible loop region. ATP is bound by residues 177 to 179 (DGK), 244 to 245 (RF), D253, 259 to 260 (RK), A276, and K280. D253 contributes to the L-methionine binding site. K284 is an L-methionine binding site.

Belongs to the AdoMet synthase family. Homotetramer; dimer of dimers. Requires Mg(2+) as cofactor. The cofactor is K(+).

The protein localises to the cytoplasm. The enzyme catalyses L-methionine + ATP + H2O = S-adenosyl-L-methionine + phosphate + diphosphate. It participates in amino-acid biosynthesis; S-adenosyl-L-methionine biosynthesis; S-adenosyl-L-methionine from L-methionine: step 1/1. Its function is as follows. Catalyzes the formation of S-adenosylmethionine (AdoMet) from methionine and ATP. The overall synthetic reaction is composed of two sequential steps, AdoMet formation and the subsequent tripolyphosphate hydrolysis which occurs prior to release of AdoMet from the enzyme. The sequence is that of S-adenosylmethionine synthase from Oceanobacillus iheyensis (strain DSM 14371 / CIP 107618 / JCM 11309 / KCTC 3954 / HTE831).